The primary structure comprises 425 residues: 2-methylserine hydroxymethyltransferase (425 aa).

Residues leucine 126 and 130 to 132 (GHL) contribute to the (6S)-5,6,7,8-tetrahydrofolate site. Position 235 is an N6-(pyridoxal phosphate)lysine (lysine 235). Glutamate 251 is a (6S)-5,6,7,8-tetrahydrofolate binding site.

It belongs to the SHMT family. As to quaternary structure, homodimer. It depends on pyridoxal 5'-phosphate as a cofactor.

It localises to the cytoplasm. The catalysed reaction is (6R)-5,10-methylene-5,6,7,8-tetrahydrofolate + D-alanine + H2O = 2-methylserine + (6S)-5,6,7,8-tetrahydrofolate. It functions in the pathway one-carbon metabolism; tetrahydrofolate interconversion. Catalyzes the reversible interconversion of alpha-methyl-L-serine to D-alanine with tetrahydrofolate (THF) serving as the one-carbon carrier. Cannot use alpha-methyl-D-serine, L-serine, D-serine or L-alanine. This is 2-methylserine hydroxymethyltransferase from Ensifer sp.